The primary structure comprises 457 residues: Exodeoxyribonuclease 7 large subunit (457 aa).

This sequence belongs to the XseA family. As to quaternary structure, heterooligomer composed of large and small subunits.

It is found in the cytoplasm. It catalyses the reaction Exonucleolytic cleavage in either 5'- to 3'- or 3'- to 5'-direction to yield nucleoside 5'-phosphates.. Bidirectionally degrades single-stranded DNA into large acid-insoluble oligonucleotides, which are then degraded further into small acid-soluble oligonucleotides. The protein is Exodeoxyribonuclease 7 large subunit of Enterobacter sp. (strain 638).